Consider the following 201-residue polypeptide: Interferon-induced transmembrane protein 10 (201 aa).

2 disordered regions span residues 1–23 (MAQG…DGTQ) and 60–88 (AAPA…KTDS). At 1–127 (MAQGPSQCPA…PDTTEVNDYY (127 aa)) the chain is on the extracellular side. The span at 63–73 (APEPSASPPMA) shows a compositional bias: pro residues. A helical transmembrane segment spans residues 128–148 (LWSIFNFVYLNFCCLGFIALA). 2 S-palmitoyl cysteine lipidation sites follow: Cys140 and Cys141. Residues 149–173 (YSLKVRDKKLLNDLNGAVEDAKTAR) lie on the Cytoplasmic side of the membrane. The chain crosses the membrane as a helical span at residues 174-194 (LFNITSSALAASCIILIFIFL). Residues 195–201 (RYPLTDY) lie on the Extracellular side of the membrane.

Belongs to the CD225/Dispanin family.

It localises to the cell membrane. The chain is Interferon-induced transmembrane protein 10 (Ifitm10) from Mus musculus (Mouse).